The sequence spans 100 residues: uncharacterized protein (100 aa).

May interact with ribosomes.

This is an uncharacterized protein from Saccharomyces cerevisiae (strain ATCC 204508 / S288c) (Baker's yeast).